A 122-amino-acid polypeptide reads, in one-letter code: Large ribosomal subunit protein uL14 (122 aa).

The protein belongs to the universal ribosomal protein uL14 family. Part of the 50S ribosomal subunit. Forms a cluster with proteins L3 and L19. In the 70S ribosome, L14 and L19 interact and together make contacts with the 16S rRNA in bridges B5 and B8.

Its function is as follows. Binds to 23S rRNA. Forms part of two intersubunit bridges in the 70S ribosome. This is Large ribosomal subunit protein uL14 from Xylella fastidiosa (strain 9a5c).